A 558-amino-acid polypeptide reads, in one-letter code: Phosphatidylserine lipase ABHD16A (558 aa).

2 helical membrane passes run I60–F80 and V93–L113. Residues R114 to L558 are Cytoplasmic-facing. Residues L281–L407 form the AB hydrolase-1 domain. Catalysis depends on charge relay system residues S355, D430, and H507.

Belongs to the AB hydrolase superfamily. ABHD16 family.

It localises to the membrane. It catalyses the reaction 1-heptadecanoyl-2-(5Z,8Z,11Z,14Z-eicosatetraenoyl)-sn-glycero-3-phosphoserine + H2O = 1-heptadecanoyl-sn-glycero-3-phosphoserine + (5Z,8Z,11Z,14Z)-eicosatetraenoate + H(+). The catalysed reaction is 1-hexadecanoyl-2-(9Z-octadecenoyl)-sn-glycero-3-phospho-L-serine + H2O = 1-hexadecanoyl-sn-glycero-3-phospho-L-serine + (9Z)-octadecenoate + H(+). The enzyme catalyses 1-octadecanoyl-2-(9Z,12Z-octadecadienoyl)-sn-glycero-3-phosphoserine + H2O = 1-octadecanoyl-sn-glycero-3-phosphoserine + (9Z,12Z)-octadecadienoate + H(+). It carries out the reaction 1-heptadecanoyl-2-(5Z,8Z,11Z,14Z-eicosatetraenoyl)-sn-glycero-3-phosphocholine + H2O = 1-heptadecanoyl-sn-glycero-3-phosphocholine + (5Z,8Z,11Z,14Z)-eicosatetraenoate + H(+). It catalyses the reaction 1-hexadecanoyl-2-(9Z-octadecenoyl)-sn-glycero-3-phosphoglycerol + H2O = 1-hexadecanoyl-sn-glycero-3-phosphoglycerol + (9Z)-octadecenoate + H(+). The catalysed reaction is 1-hexadecanoyl-2-(9Z-octadecenoyl)-sn-glycero-3-phospho-(1D-myo-inositol) + H2O = 1-hexadecanoyl-sn-glycero-3-phospho-(1D-myo-inositol) + (9Z)-octadecenoate + H(+). The enzyme catalyses 1-heptadecanoyl-2-(5Z,8Z,11Z,14Z-eicosatetraenoyl)-sn-glycero-3-phosphoethanolamine + H2O = 1-heptadecanoyl-sn-glycero-3-phosphoethanolamine + (5Z,8Z,11Z,14Z)-eicosatetraenoate + H(+). It carries out the reaction 1-hexadecanoyl-2-(9Z-octadecenoyl)-sn-glycero-3-phospho-(1'-sn-glycerol) + H2O = 1-hexadecanoyl-sn-glycero-3-phospho-(1'-sn-glycerol) + (9Z)-octadecenoate + H(+). It catalyses the reaction Hydrolyzes glycerol monoesters of long-chain fatty acids.. The catalysed reaction is 1-tetradecanoylglycerol + H2O = tetradecanoate + glycerol + H(+). The enzyme catalyses 2-hexadecanoylglycerol + H2O = glycerol + hexadecanoate + H(+). It carries out the reaction 1-(9Z-octadecenoyl)-glycerol + H2O = glycerol + (9Z)-octadecenoate + H(+). It catalyses the reaction 2-(9Z-octadecenoyl)-glycerol + H2O = glycerol + (9Z)-octadecenoate + H(+). The catalysed reaction is 2-(9Z,12Z-octadecadienoyl)-glycerol + H2O = (9Z,12Z)-octadecadienoate + glycerol + H(+). The enzyme catalyses 1-(5Z,8Z,11Z,14Z-eicosatetraenoyl)-glycerol + H2O = glycerol + (5Z,8Z,11Z,14Z)-eicosatetraenoate + H(+). It carries out the reaction 2-(5Z,8Z,11Z,14Z-eicosatetraenoyl)-glycerol + H2O = glycerol + (5Z,8Z,11Z,14Z)-eicosatetraenoate + H(+). It catalyses the reaction prostaglandin D2-1-glycerol ester + H2O = prostaglandin D2 + glycerol + H(+). The catalysed reaction is 2-glyceryl-15-deoxy-Delta(12,14)-prostaglandin J2 + H2O = 15-deoxy-Delta(12,14)-prostaglandin J2 + glycerol + H(+). The enzyme catalyses 1-(9Z,12Z-octadecadienoyl)-glycerol + H2O = (9Z,12Z)-octadecadienoate + glycerol + H(+). Functionally, phosphatidylserine (PS) lipase that mediates the hydrolysis of phosphatidylserine to generate lysophosphatidylserine (LPS). LPS constitutes a class of signaling lipids that regulates immunological and neurological processes. Has no activity towards diacylglycerol, triacylglycerol or lysophosphatidylserine lipase. Also has monoacylglycerol lipase activity, with preference for 1-(9Z,12Z-octadecadienoyl)-glycerol (1-LG) and 2-glyceryl-15-deoxy-Delta(12,14)-prostaglandin J2 (15d-PGJ(2)-G). In Bos taurus (Bovine), this protein is Phosphatidylserine lipase ABHD16A.